Here is a 342-residue protein sequence, read N- to C-terminus: Holliday junction branch migration complex subunit RuvB (342 aa).

Residues 1–185 are large ATPase domain (RuvB-L); sequence MTVKPLRDVT…FPIQERLEYY (185 aa). ATP is bound by residues L24, R25, G66, K69, T70, S71, 132–134, R175, Y185, and R222; that span reads EDY. Residue T70 coordinates Mg(2+). The small ATPAse domain (RuvB-S) stretch occupies residues 186–256; sequence GPAELKEIAV…VVDRTLRRLE (71 aa). Residues 259-342 are head domain (RuvB-H); sequence ARGLDAMDRR…RPGGKQGSLV (84 aa). Residues R314 and R319 each contribute to the DNA site.

It belongs to the RuvB family. Homohexamer. Forms an RuvA(8)-RuvB(12)-Holliday junction (HJ) complex. HJ DNA is sandwiched between 2 RuvA tetramers; dsDNA enters through RuvA and exits via RuvB. An RuvB hexamer assembles on each DNA strand where it exits the tetramer. Each RuvB hexamer is contacted by two RuvA subunits (via domain III) on 2 adjacent RuvB subunits; this complex drives branch migration. In the full resolvosome a probable DNA-RuvA(4)-RuvB(12)-RuvC(2) complex forms which resolves the HJ.

The protein localises to the cytoplasm. It catalyses the reaction ATP + H2O = ADP + phosphate + H(+). In terms of biological role, the RuvA-RuvB-RuvC complex processes Holliday junction (HJ) DNA during genetic recombination and DNA repair, while the RuvA-RuvB complex plays an important role in the rescue of blocked DNA replication forks via replication fork reversal (RFR). RuvA specifically binds to HJ cruciform DNA, conferring on it an open structure. The RuvB hexamer acts as an ATP-dependent pump, pulling dsDNA into and through the RuvAB complex. RuvB forms 2 homohexamers on either side of HJ DNA bound by 1 or 2 RuvA tetramers; 4 subunits per hexamer contact DNA at a time. Coordinated motions by a converter formed by DNA-disengaged RuvB subunits stimulates ATP hydrolysis and nucleotide exchange. Immobilization of the converter enables RuvB to convert the ATP-contained energy into a lever motion, pulling 2 nucleotides of DNA out of the RuvA tetramer per ATP hydrolyzed, thus driving DNA branch migration. The RuvB motors rotate together with the DNA substrate, which together with the progressing nucleotide cycle form the mechanistic basis for DNA recombination by continuous HJ branch migration. Branch migration allows RuvC to scan DNA until it finds its consensus sequence, where it cleaves and resolves cruciform DNA. The chain is Holliday junction branch migration complex subunit RuvB from Anaeromyxobacter sp. (strain K).